The chain runs to 233 residues: Hydroxyacylglutathione hydrolase (233 aa).

His52, His54, Asp56, His57, His108, Asp125, and His163 together coordinate Zn(2+).

The protein belongs to the metallo-beta-lactamase superfamily. Glyoxalase II family. Monomer. Zn(2+) is required as a cofactor.

The enzyme catalyses an S-(2-hydroxyacyl)glutathione + H2O = a 2-hydroxy carboxylate + glutathione + H(+). It functions in the pathway secondary metabolite metabolism; methylglyoxal degradation; (R)-lactate from methylglyoxal: step 2/2. Thiolesterase that catalyzes the hydrolysis of S-D-lactoyl-glutathione to form glutathione and D-lactic acid. The protein is Hydroxyacylglutathione hydrolase of Actinobacillus succinogenes (strain ATCC 55618 / DSM 22257 / CCUG 43843 / 130Z).